A 487-amino-acid chain; its full sequence is Berbamunine synthase (487 aa).

Cys429 lines the heme pocket.

It belongs to the cytochrome P450 family. Heme is required as a cofactor.

It localises to the endoplasmic reticulum membrane. It is found in the microsome membrane. The catalysed reaction is (R)-N-methylcoclaurine + (S)-N-methylcoclaurine + reduced [NADPH--hemoprotein reductase] + O2 = berbamunine + oxidized [NADPH--hemoprotein reductase] + 2 H2O + H(+). It functions in the pathway alkaloid biosynthesis; berbamunine biosynthesis; berbamunine from (R)-N-methylcoclaurine and (S)-N-methylcoclaurine: step 1/1. In terms of biological role, forms the bisbenzylisoquinoline alkaloid berbamunine by phenol oxidation of N-methylcoclaurine without the incorporation of oxygen into the product. Oxidatively couples either two molecules of (R)-N-methylcoclaurine to form the (R,R) dimer guattegaumerine or one molecule each of (R)- and (S)-N-methylcoclaurine to form the (R,S) dimer berbamunine. The protein is Berbamunine synthase (CYP80A1) of Berberis stolonifera (Barberry).